The chain runs to 263 residues: 3-methyl-2-oxobutanoate hydroxymethyltransferase (263 aa).

Residues aspartate 44 and aspartate 83 each contribute to the Mg(2+) site. Residues 44–45, aspartate 83, and lysine 112 contribute to the 3-methyl-2-oxobutanoate site; that span reads DS. Mg(2+) is bound at residue glutamate 114. The Proton acceptor role is filled by glutamate 181.

It belongs to the PanB family. As to quaternary structure, homodecamer; pentamer of dimers. The cofactor is Mg(2+).

It localises to the cytoplasm. The enzyme catalyses 3-methyl-2-oxobutanoate + (6R)-5,10-methylene-5,6,7,8-tetrahydrofolate + H2O = 2-dehydropantoate + (6S)-5,6,7,8-tetrahydrofolate. It participates in cofactor biosynthesis; (R)-pantothenate biosynthesis; (R)-pantoate from 3-methyl-2-oxobutanoate: step 1/2. Functionally, catalyzes the reversible reaction in which hydroxymethyl group from 5,10-methylenetetrahydrofolate is transferred onto alpha-ketoisovalerate to form ketopantoate. In Nitrosospira multiformis (strain ATCC 25196 / NCIMB 11849 / C 71), this protein is 3-methyl-2-oxobutanoate hydroxymethyltransferase.